A 148-amino-acid chain; its full sequence is uncharacterized protein (148 aa).

The chain crosses the membrane as a helical span at residues 1–21 (MLQNYAIVLGMAVAVAIWYFF). Residues 27–61 (APPGPNPPKPDPPKPDPPKMHMPKKKPHWMDPHLT) form a disordered region.

It is found in the host membrane. This is an uncharacterized protein from Frog virus 3 (isolate Goorha) (FV-3).